The chain runs to 480 residues: uncharacterized protein (480 aa).

N6-(pyridoxal phosphate)lysine is present on Lys222.

Belongs to the Orn/Lys/Arg decarboxylase class-I family. Requires pyridoxal 5'-phosphate as cofactor.

This is an uncharacterized protein from Bacillus subtilis (strain 168).